A 467-amino-acid polypeptide reads, in one-letter code: Glutamate--tRNA ligase (467 aa).

A 'HIGH' region motif is present at residues 10–20; sequence PSPTGYLHVGG. Residues 238-242 carry the 'KMSKS' region motif; it reads RLSKR. Lysine 241 contributes to the ATP binding site.

Belongs to the class-I aminoacyl-tRNA synthetase family. Glutamate--tRNA ligase type 1 subfamily. Monomer.

Its subcellular location is the cytoplasm. The enzyme catalyses tRNA(Glu) + L-glutamate + ATP = L-glutamyl-tRNA(Glu) + AMP + diphosphate. Functionally, catalyzes the attachment of glutamate to tRNA(Glu) in a two-step reaction: glutamate is first activated by ATP to form Glu-AMP and then transferred to the acceptor end of tRNA(Glu). This Citrifermentans bemidjiense (strain ATCC BAA-1014 / DSM 16622 / JCM 12645 / Bem) (Geobacter bemidjiensis) protein is Glutamate--tRNA ligase.